Reading from the N-terminus, the 828-residue chain is Periplasmic nitrate reductase (828 aa).

A signal peptide (tat-type signal) is located at residues 1–31; it reads MKLSRRSFMKANAVAAAAAAAGLSVPGVARA. The 57-residue stretch at 39–95 folds into the 4Fe-4S Mo/W bis-MGD-type domain; that stretch reads IKWDKAPCRFCGTGCGVLVGTQQGRVVACQGDPDAPVNRGLNCIKGYFLPKIMYGKD. [4Fe-4S] cluster is bound by residues Cys46, Cys49, Cys53, and Cys81. Mo-bis(molybdopterin guanine dinucleotide) is bound by residues Lys83, Gln150, Asn175, Cys179, 212–219, 243–247, 262–264, Met372, Gln376, Asn482, 508–509, Lys531, Asp558, and 718–727; these read WGSNMAEM, STFQH, QSD, SD, and TGRVLEHWHT. Residue Phe794 coordinates substrate. Residues Asn802 and Lys819 each coordinate Mo-bis(molybdopterin guanine dinucleotide).

Belongs to the prokaryotic molybdopterin-containing oxidoreductase family. NasA/NapA/NarB subfamily. In terms of assembly, component of the periplasmic nitrate reductase NapAB complex composed of NapA and NapB. The cofactor is [4Fe-4S] cluster. Mo-bis(molybdopterin guanine dinucleotide) serves as cofactor. Predicted to be exported by the Tat system. The position of the signal peptide cleavage has not been experimentally proven.

The protein localises to the periplasm. The catalysed reaction is 2 Fe(II)-[cytochrome] + nitrate + 2 H(+) = 2 Fe(III)-[cytochrome] + nitrite + H2O. Its function is as follows. Catalytic subunit of the periplasmic nitrate reductase complex NapAB. Receives electrons from NapB and catalyzes the reduction of nitrate to nitrite. The sequence is that of Periplasmic nitrate reductase from Salmonella agona (strain SL483).